The following is a 375-amino-acid chain: Alcohol dehydrogenase 1 (375 aa).

Residue Ser-1 is modified to N-acetylserine. Cys-46, His-67, Cys-97, Cys-100, Cys-103, Cys-111, and Cys-174 together coordinate Zn(2+). Residues 199–204, Asp-223, Lys-228, 293–295, and Arg-370 each bind NAD(+); these read GLGGVG and VGV.

The protein belongs to the zinc-containing alcohol dehydrogenase family. Class-I subfamily. As to quaternary structure, homodimer. Zn(2+) serves as cofactor.

The protein localises to the cytoplasm. The catalysed reaction is a primary alcohol + NAD(+) = an aldehyde + NADH + H(+). The enzyme catalyses a secondary alcohol + NAD(+) = a ketone + NADH + H(+). In Naja naja (Indian cobra), this protein is Alcohol dehydrogenase 1.